The chain runs to 509 residues: GMP synthase [glutamine-hydrolyzing] (509 aa).

The region spanning 4-194 (LVLVVDFGGQ…LYNICGLENS (191 aa)) is the Glutamine amidotransferase type-1 domain. Cys81 (nucleophile) is an active-site residue. Active-site residues include His168 and Glu170. Positions 195 to 384 (WSMASFAEEK…LGIPHHLVWR (190 aa)) constitute a GMPS ATP-PPase domain. An ATP-binding site is contributed by 222-228 (SGGVDSS).

In terms of assembly, homodimer.

The enzyme catalyses XMP + L-glutamine + ATP + H2O = GMP + L-glutamate + AMP + diphosphate + 2 H(+). The protein operates within purine metabolism; GMP biosynthesis; GMP from XMP (L-Gln route): step 1/1. Catalyzes the synthesis of GMP from XMP. The polypeptide is GMP synthase [glutamine-hydrolyzing] (Clostridium perfringens (strain 13 / Type A)).